Reading from the N-terminus, the 352-residue chain is Popeye domain-containing protein 1 (352 aa).

The Extracellular segment spans residues 1–38 (MSNTTSALPSSVPAVSLDPNATLCQDWEQSHHLLFHLA). N-linked (GlcNAc...) asparagine glycans are attached at residues Asn-3 and Asn-20. The helical transmembrane segment at 39-59 (NLSLGLGFLIPTTLALHMIFL) threads the bilayer. Residue Arg-60 is a topological domain, cytoplasmic. Residues 61–81 (LLLMTGCSLFIAWATLYRCTL) form a helical membrane-spanning segment. Position 82 (Asp-82) is a topological domain, extracellular. Residues 83–103 (VMVWNVVFLLVNFMHFFFLLY) traverse the membrane as a helical segment. Residues 104–352 (KRRPIKIDRE…NVSKTTKKDI (249 aa)) lie on the Cytoplasmic side of the membrane. A disordered region spans residues 299 to 352 (ILRGGSTGSSLQKNPLTKTSTTMKPIEEGLEDDVFESESPTTSQNVSKTTKKDI). Polar residues-rich tracts occupy residues 306-321 (GSSLQKNPLTKTSTTM) and 336-346 (ESPTTSQNVSK).

This sequence belongs to the popeye family. Expressed in skeletal muscle (at protein level).

The protein localises to the lateral cell membrane. The protein resides in the cell junction. It is found in the tight junction. Its subcellular location is the membrane. It localises to the cell membrane. The protein localises to the sarcolemma. The protein resides in the caveola. In terms of biological role, cell adhesion molecule involved in the establishment and/or maintenance of cell integrity. Involved in skeletal muscle and heart development as well as in the maintenance of heart function. May play a role in vamp3-mediated vesicular transport and recycling of receptor molecules. Involved in the formation and regulation of the tight junction (TJ) paracellular permeability barrier in epithelial cells. May induce primordial adhesive contact and aggregation of epithelial cells in a Ca(2+)-independent manner. May be involved in epithelial movement during corneal sheet formation and regeneration. May play a role in the regulation of cell shape and movement by modulating the Rho-GTPase activity. May also be involved in striated muscle regeneration and in the regulation of cell spreading. This chain is Popeye domain-containing protein 1 (popdc1), found in Danio rerio (Zebrafish).